Here is a 1603-residue protein sequence, read N- to C-terminus: DNA polymerase theta (1603 aa).

In terms of domain architecture, Helicase ATP-binding spans 38-208 (EARQFEDQHL…WLDGAKVFEA (171 aa)). 51 to 58 (APTSAGKS) lines the ATP pocket. The DEAH box motif lies at 149 to 152 (DEMH). A Helicase C-terminal domain is found at 283-434 (TDSSLLEILK…GVLTRKRDAE (152 aa)).

The protein belongs to the DNA polymerase type-A family.

The protein resides in the nucleus. It carries out the reaction DNA(n) + a 2'-deoxyribonucleoside 5'-triphosphate = DNA(n+1) + diphosphate. Functionally, DNA polymerase that promotes microhomology-mediated end-joining (MMEJ), an alternative non-homologous end-joining (NHEJ) machinery triggered in response to double-strand breaks in DNA. MMEJ is an error-prone repair pathway that produces deletions of sequences from the strand being repaired and promotes genomic rearrangements, such as telomere fusions. Required to prevent extensive loss of sequences near G-quadruplex (G4) DNA sites, which are prone to cause genome alterations, by generating deletions. The chain is DNA polymerase theta from Caenorhabditis elegans.